A 188-amino-acid polypeptide reads, in one-letter code: Protein Cripto (188 aa).

The first 30 residues, 1–30, serve as a signal peptide directing secretion; the sequence is MDCRKMARFSYSVIWIMAISKVFELGLVAG. The region spanning 78-107 is the EGF-like domain; that stretch reads LNRTCCLNGGTCMLGSFCACPPSFYGRNCE. Asparagine 79 is a glycosylation site (N-linked (GlcNAc...) asparagine). 6 disulfides stabilise this stretch: cysteine 82–cysteine 89, cysteine 83–cysteine 95, cysteine 97–cysteine 106, cysteine 115–cysteine 133, cysteine 128–cysteine 149, and cysteine 131–cysteine 140. Aspartate 150 is lipidated: GPI-anchor amidated aspartate. The propeptide at 151–188 is removed in mature form; sequence GLVMDEHLVASRTPELPPSARTTTFMLVGICLSIQSYY.

Belongs to the EGF-CFC (Cripto-1/FRL1/Cryptic) family. Interacts with the activin type-1 receptor ACVR1B. Post-translationally, the GPI-anchor is attached to the protein in the endoplasmic reticulum and serves to target the protein to the cell surface. There, it is processed by GPI processing phospholipase A2 (TMEM8A), removing an acyl-chain at the sn-2 position of GPI and releasing CRIPTO as a lysophosphatidylinositol-bearing form, which is further cleaved by phospholipase D (GPLD1) into a soluble form. In terms of tissue distribution, preferentially expressed in gastric and colorectal carcinomas than in their normal counterparts. Expressed in breast and lung.

It localises to the cell membrane. The protein resides in the secreted. Functionally, GPI-anchored cell membrane protein involved in Nodal signaling. Cell-associated CRIPTO acts as a Nodal coreceptor in cis. Shedding of CRIPTO by TMEM8A modulates Nodal signaling by allowing soluble CRIPTO to act as a Nodal coreceptor on other cells. Could play a role in the determination of the epiblastic cells that subsequently give rise to the mesoderm. In Homo sapiens (Human), this protein is Protein Cripto.